We begin with the raw amino-acid sequence, 286 residues long: 4-diphosphocytidyl-2-C-methyl-D-erythritol kinase (286 aa).

Residue K11 is part of the active site. Position 93–103 (P93–S103) interacts with ATP. D135 is a catalytic residue.

The protein belongs to the GHMP kinase family. IspE subfamily.

It catalyses the reaction 4-CDP-2-C-methyl-D-erythritol + ATP = 4-CDP-2-C-methyl-D-erythritol 2-phosphate + ADP + H(+). The protein operates within isoprenoid biosynthesis; isopentenyl diphosphate biosynthesis via DXP pathway; isopentenyl diphosphate from 1-deoxy-D-xylulose 5-phosphate: step 3/6. Catalyzes the phosphorylation of the position 2 hydroxy group of 4-diphosphocytidyl-2C-methyl-D-erythritol. The sequence is that of 4-diphosphocytidyl-2-C-methyl-D-erythritol kinase from Chlorobium phaeobacteroides (strain BS1).